The primary structure comprises 424 residues: MSGMILDELSWRGLIAQSTDLDTLAAEAQRGPMTVYAGFDPTAPSLHAGHLVPLLTLRRFQRAGHRPIVLAGGATGMIGDPRDVGERSLNEADTVAEWTERIRGQLERFVDFDDSPMGAIVENNLEWTGSLSAIEFLRDIGKHFSVNVMLARDTIRRRLAGEGISYTEFSYLLLQANDYVELHRRHGCTLQIGGADQWGNIIAGVRLVRQKLGATVHALTVPLVTAADGTKFGKSTGGGSLWLDPQMTSPYAWYQYFVNTADADVIRYLRWFTFLSADELAELEQATAQRPQQRAAQRRLASELTVLVHGEAATAAVEHASRALFGRGELARLDEATLAAALRETTVAELKPGSPDGIVDLLVASGLSASKGAARRTIHEGGVSVNNIRVDNEEWVPQSSDFLHGRWLVLRRGKRSIAGVERIG.

Residue Tyr-36 participates in L-tyrosine binding. The 'HIGH' region signature appears at Pro-41–His-50. L-tyrosine-binding residues include Tyr-171 and Gln-175. A 'KMSKS' region motif is present at residues Lys-231–Ser-235. Lys-234 lines the ATP pocket. The region spanning Asp-356–Gly-413 is the S4 RNA-binding domain.

It belongs to the class-I aminoacyl-tRNA synthetase family. TyrS type 1 subfamily. As to quaternary structure, homodimer.

It is found in the cytoplasm. It catalyses the reaction tRNA(Tyr) + L-tyrosine + ATP = L-tyrosyl-tRNA(Tyr) + AMP + diphosphate + H(+). In terms of biological role, catalyzes the attachment of tyrosine to tRNA(Tyr) in a two-step reaction: tyrosine is first activated by ATP to form Tyr-AMP and then transferred to the acceptor end of tRNA(Tyr). The protein is Tyrosine--tRNA ligase of Mycobacterium bovis (strain ATCC BAA-935 / AF2122/97).